The following is a 278-amino-acid chain: Phosphate import ATP-binding protein PstB (278 aa).

Residues 32 to 273 (YETRDLNLWY…PSDKRTEDYI (242 aa)) form the ABC transporter domain. Residue 64–71 (GPSGCGKS) participates in ATP binding.

The protein belongs to the ABC transporter superfamily. Phosphate importer (TC 3.A.1.7) family. In terms of assembly, the complex is composed of two ATP-binding proteins (PstB), two transmembrane proteins (PstC and PstA) and a solute-binding protein (PstS).

Its subcellular location is the cell membrane. It carries out the reaction phosphate(out) + ATP + H2O = ADP + 2 phosphate(in) + H(+). In terms of biological role, part of the ABC transporter complex PstSACB involved in phosphate import. Responsible for energy coupling to the transport system. The chain is Phosphate import ATP-binding protein PstB from Halalkalibacterium halodurans (strain ATCC BAA-125 / DSM 18197 / FERM 7344 / JCM 9153 / C-125) (Bacillus halodurans).